Consider the following 439-residue polypeptide: MNLYLLVLSSTFLCLAAEEIYKTNGNTTISENSNILNVLPSNDIWKTGSITHDKKDYLEALFSKSYYKRECEHETRLEPVYFYPGENVKIKCYMCNLALVFNGNPKGWARVKNIENFLEKGEKFGSKDGPEAEMVENSDIVEDQNAQSSARSLGKPYYYEEDGFLVIENANVYSQGVYFCFDEDSVASQRFFYILIPILPVFHIDSKNNSKIMELTNNCSDSVRKFPNHYWMNSNEKVPFDDQDTCFARNGMDDWKCYDFEKIKRFEKCENPATSCVKKFVHPTLPNDIPISINLQWSPWSECNDRTQTRTGQCFIRLERQLDDSDGLPENWSWLRKLNTMEKHLAFRDGVPLFNGLLASWLYEVESLESCLDTELGPKSKLSGYDNFFGNVLTSLFSNKTISGIKMSDNAFKYCIRTKTLDETNDALIGTYTEDKRTC.

This is an uncharacterized protein from Caenorhabditis elegans.